Consider the following 30-residue polypeptide: Kalata-B10 (30 aa).

The cyclopeptide (Gly-Asp) cross-link spans 1–30 (GLPTCGETCFGGTCNTPGCSCSSWPICTRD). 3 cysteine pairs are disulfide-bonded: C5–C19, C9–C21, and C14–C27.

The protein belongs to the cyclotide family. Moebius subfamily. This peptide occurs in both cyclic and linear forms. The linear form contains unmodified Trp-24, the cyclic peptide occurs in two forms with unmodified Trp-24, and with Trp-24 oxidized to form oxindolylalanine. Oxidation is enhanced by exposure to sunlight.

In terms of biological role, probably participates in a plant defense mechanism. This chain is Kalata-B10, found in Oldenlandia affinis.